The primary structure comprises 295 residues: MYFQDVIATLHQFWAAQGCLIAQPYDVEKGAGTKSPHTFLRALGPEPWAVAYVEPCRRPADGRYGENPNRYQYYYQYQVLIKPSPDNIQEIYLESLRALGIRPQDHDIRFVEDNWEDAAVGAWGVGWEVWLDGMEVTQFTYFQQCGGLDCRPVSIEITYGLERLTMYLQEVDAIASIRWNSTLTYGDVHLQGEIEQSTYNFEASDPERLFTLFSLYQQEAEQLLEKQLVLPSLDYVLKCSHTFNLLDARGVISVAERTRYIGRIRGLARRVAQAYVQQREALGFPLLKEPAAIAP.

The protein belongs to the class-II aminoacyl-tRNA synthetase family. Tetramer of two alpha and two beta subunits.

The protein resides in the cytoplasm. The catalysed reaction is tRNA(Gly) + glycine + ATP = glycyl-tRNA(Gly) + AMP + diphosphate. This is Glycine--tRNA ligase alpha subunit from Thermosynechococcus vestitus (strain NIES-2133 / IAM M-273 / BP-1).